The following is a 780-amino-acid chain: LPS-assembly protein LptD (780 aa).

A signal peptide spans 1–24 (MKKRLPTLLASLIGSALYSQQALA).

Belongs to the LptD family. Component of the lipopolysaccharide transport and assembly complex. Interacts with LptE and LptA.

It localises to the cell outer membrane. Functionally, together with LptE, is involved in the assembly of lipopolysaccharide (LPS) at the surface of the outer membrane. The sequence is that of LPS-assembly protein LptD from Sodalis glossinidius (strain morsitans).